The following is a 431-amino-acid chain: UDP-N-acetylglucosamine 1-carboxyvinyltransferase (431 aa).

22–23 (KN) contacts phosphoenolpyruvate. Residue arginine 93 coordinates UDP-N-acetyl-alpha-D-glucosamine. Cysteine 117 (proton donor) is an active-site residue. A 2-(S-cysteinyl)pyruvic acid O-phosphothioketal modification is found at cysteine 117. Aspartate 307 and valine 329 together coordinate UDP-N-acetyl-alpha-D-glucosamine.

It belongs to the EPSP synthase family. MurA subfamily.

It is found in the cytoplasm. The catalysed reaction is phosphoenolpyruvate + UDP-N-acetyl-alpha-D-glucosamine = UDP-N-acetyl-3-O-(1-carboxyvinyl)-alpha-D-glucosamine + phosphate. The protein operates within cell wall biogenesis; peptidoglycan biosynthesis. In terms of biological role, cell wall formation. Adds enolpyruvyl to UDP-N-acetylglucosamine. This chain is UDP-N-acetylglucosamine 1-carboxyvinyltransferase, found in Nitrosococcus oceani (strain ATCC 19707 / BCRC 17464 / JCM 30415 / NCIMB 11848 / C-107).